Here is a 188-residue protein sequence, read N- to C-terminus: HTH-type transcriptional regulator LmrA (188 aa).

Residues 4–64 (GDSREKILSA…IEAVNEMKEY (61 aa)) enclose the HTH tetR-type domain. Residues 27 to 46 (GLNQIIKESGAPKGSLYYHF) constitute a DNA-binding region (H-T-H motif).

Functionally, acts as a repressor of the lincomycin-resistance (lmrAB) and yxaGH operons. This is HTH-type transcriptional regulator LmrA (lmrA) from Bacillus subtilis (strain 168).